We begin with the raw amino-acid sequence, 116 residues long: Ribonuclease P protein component (116 aa).

The protein belongs to the RnpA family. As to quaternary structure, consists of a catalytic RNA component (M1 or rnpB) and a protein subunit.

It carries out the reaction Endonucleolytic cleavage of RNA, removing 5'-extranucleotides from tRNA precursor.. In terms of biological role, RNaseP catalyzes the removal of the 5'-leader sequence from pre-tRNA to produce the mature 5'-terminus. It can also cleave other RNA substrates such as 4.5S RNA. The protein component plays an auxiliary but essential role in vivo by binding to the 5'-leader sequence and broadening the substrate specificity of the ribozyme. The polypeptide is Ribonuclease P protein component (Geobacter sp. (strain M21)).